The following is a 432-amino-acid chain: Adenosylhomocysteinase (432 aa).

Residues threonine 56, aspartate 131, and glutamate 156 each coordinate substrate. Threonine 157–threonine 159 is an NAD(+) binding site. Substrate contacts are provided by lysine 186 and aspartate 190. NAD(+) is bound by residues asparagine 191, glycine 222 to glycine 227, glutamate 243, isoleucine 299 to histidine 301, and asparagine 346.

Belongs to the adenosylhomocysteinase family. It depends on NAD(+) as a cofactor.

The catalysed reaction is S-adenosyl-L-homocysteine + H2O = L-homocysteine + adenosine. The protein operates within amino-acid biosynthesis; L-homocysteine biosynthesis; L-homocysteine from S-adenosyl-L-homocysteine: step 1/1. In terms of biological role, adenosylhomocysteine is a competitive inhibitor of S-adenosyl-L-methionine-dependent methyl transferase reactions; therefore adenosylhomocysteinase may play a key role in the control of methylations via regulation of the intracellular concentration of adenosylhomocysteine. The chain is Adenosylhomocysteinase (Ahcy13) from Anopheles gambiae (African malaria mosquito).